A 116-amino-acid chain; its full sequence is NADH-ubiquinone oxidoreductase chain 3 (116 aa).

The next 3 helical transmembrane spans lie at 3-23 (LLMT…IVSF), 56-76 (FFLI…LLPL), and 85-105 (PLLT…GLIY).

The protein belongs to the complex I subunit 3 family.

The protein resides in the mitochondrion membrane. The enzyme catalyses a ubiquinone + NADH + 5 H(+)(in) = a ubiquinol + NAD(+) + 4 H(+)(out). In terms of biological role, core subunit of the mitochondrial membrane respiratory chain NADH dehydrogenase (Complex I) that is believed to belong to the minimal assembly required for catalysis. Complex I functions in the transfer of electrons from NADH to the respiratory chain. The immediate electron acceptor for the enzyme is believed to be ubiquinone. This is NADH-ubiquinone oxidoreductase chain 3 (MT-ND3) from Paralichthys olivaceus (Bastard halibut).